The following is a 139-amino-acid chain: Small ribosomal subunit protein uS12 (139 aa).

Residues 1–21 (MSTVSQLIKKRRSSKTSKTKA) form a disordered region. A compositionally biased stretch (basic residues) spans 8-18 (IKKRRSSKTSK).

This sequence belongs to the universal ribosomal protein uS12 family. Part of the 30S ribosomal subunit. Contacts proteins S8 and S17. May interact with IF1 in the 30S initiation complex.

Functionally, with S4 and S5 plays an important role in translational accuracy. Interacts with and stabilizes bases of the 16S rRNA that are involved in tRNA selection in the A site and with the mRNA backbone. Located at the interface of the 30S and 50S subunits, it traverses the body of the 30S subunit contacting proteins on the other side and probably holding the rRNA structure together. The combined cluster of proteins S8, S12 and S17 appears to hold together the shoulder and platform of the 30S subunit. The polypeptide is Small ribosomal subunit protein uS12 (Onion yellows phytoplasma (strain OY-M)).